The sequence spans 175 residues: NADH-ubiquinone oxidoreductase chain 6 (175 aa).

5 consecutive transmembrane segments (helical) span residues 1 to 21, 25 to 45, 47 to 67, 88 to 108, and 149 to 169; these read MMTY…VGFS, SPIY…GIVL, FGGS…MLVV, AVLG…CYIL, and YGTW…LVIM.

This sequence belongs to the complex I subunit 6 family. As to quaternary structure, core subunit of respiratory chain NADH dehydrogenase (Complex I) which is composed of 45 different subunits.

It localises to the mitochondrion inner membrane. The enzyme catalyses a ubiquinone + NADH + 5 H(+)(in) = a ubiquinol + NAD(+) + 4 H(+)(out). Its function is as follows. Core subunit of the mitochondrial membrane respiratory chain NADH dehydrogenase (Complex I) which catalyzes electron transfer from NADH through the respiratory chain, using ubiquinone as an electron acceptor. Essential for the catalytic activity and assembly of complex I. This chain is NADH-ubiquinone oxidoreductase chain 6 (MT-ND6), found in Halichoerus grypus (Gray seal).